The following is a 434-amino-acid chain: Methylenetetrahydrofolate--tRNA-(uracil-5-)-methyltransferase TrmFO (434 aa).

Residue 10–15 (GAGLAG) coordinates FAD.

It belongs to the MnmG family. TrmFO subfamily. Requires FAD as cofactor.

The protein resides in the cytoplasm. The catalysed reaction is uridine(54) in tRNA + (6R)-5,10-methylene-5,6,7,8-tetrahydrofolate + NADH + H(+) = 5-methyluridine(54) in tRNA + (6S)-5,6,7,8-tetrahydrofolate + NAD(+). It catalyses the reaction uridine(54) in tRNA + (6R)-5,10-methylene-5,6,7,8-tetrahydrofolate + NADPH + H(+) = 5-methyluridine(54) in tRNA + (6S)-5,6,7,8-tetrahydrofolate + NADP(+). Catalyzes the folate-dependent formation of 5-methyl-uridine at position 54 (M-5-U54) in all tRNAs. The chain is Methylenetetrahydrofolate--tRNA-(uracil-5-)-methyltransferase TrmFO from Bacillus cereus (strain ATCC 10987 / NRS 248).